A 428-amino-acid chain; its full sequence is Cyclic AMP-responsive element-binding protein 3-like protein 3-A (428 aa).

Residues 1–286 lie on the Cytoplasmic side of the membrane; sequence MENYSDQGGD…VMNGSNKPVQ (286 aa). The segment covering 67-83 has biased composition (low complexity); that stretch reads VSGSPVWSPSPSDSGIS. Residues 67-104 form a disordered region; it reads VSGSPVWSPSPSDSGISEDPHSDHIDSPPPNASPPMEP. The segment covering 93 to 103 has biased composition (pro residues); sequence SPPPNASPPME. The bZIP domain occupies 210 to 273; sequence ILKKIRRKIR…ISLMEQLRRL (64 aa). A basic motif region spans residues 212–241; it reads KKIRRKIRNKQSAQESRKKKKEYIDGLESR. The interval 252-273 is leucine-zipper; it reads LQRKVFQLEKCNISLMEQLRRL. A helical; Signal-anchor for type II membrane protein transmembrane segment spans residues 287-303; it reads AGTCVLVLLLSFTLILL. Residues 304–428 lie on the Lumenal side of the membrane; sequence PNLKPFTDTK…SRRSPHADDM (125 aa). Residues 381-428 form a disordered region; sequence TEYDPESHNHSFDQHDEHHHGDPITGHVATVTLNPRRGSRRSPHADDM. Basic and acidic residues predominate over residues 385 to 402; that stretch reads PESHNHSFDQHDEHHHGD. Asn-389 is a glycosylation site (N-linked (GlcNAc...) asparagine).

It belongs to the bZIP family. ATF subfamily. In terms of assembly, binds DNA as a dimer. Post-translationally, controlled by regulated intramembrane proteolysis (RIP). A fragment containing the cytoplasmic transcription factor domain is released by proteolysis. The cleavage seems to be performed sequentially by site-1 and site-2 proteases.

The protein resides in the endoplasmic reticulum membrane. The protein localises to the nucleus. Transcriptional activator. Binds the cAMP response element (CRE). Activates transcription through box-B element and CRE. Seems to function synergistically with atf6. Regulates FGF21 transcription. This Danio rerio (Zebrafish) protein is Cyclic AMP-responsive element-binding protein 3-like protein 3-A (creb3l3a).